The following is a 374-amino-acid chain: Alanine racemase (374 aa).

K35 acts as the Proton acceptor; specific for D-alanine in catalysis. K35 is modified (N6-(pyridoxal phosphate)lysine). A substrate-binding site is contributed by R133. The active-site Proton acceptor; specific for L-alanine is Y261. M315 serves as a coordination point for substrate.

This sequence belongs to the alanine racemase family. Requires pyridoxal 5'-phosphate as cofactor.

It catalyses the reaction L-alanine = D-alanine. It participates in amino-acid biosynthesis; D-alanine biosynthesis; D-alanine from L-alanine: step 1/1. Its function is as follows. Catalyzes the interconversion of L-alanine and D-alanine. May also act on other amino acids. This chain is Alanine racemase (alr), found in Psychrobacter sp. (strain PRwf-1).